We begin with the raw amino-acid sequence, 941 residues long: Myosin heavy chain kinase D (941 aa).

Positions 8–48 (KLSKKIEKILEKNDYLKKKVEQLTKSVDNHEFKIQELLLLL) form a coiled coil. Low complexity-rich tracts occupy residues 57–70 (TTTTTTTTTNNNST), 84–115 (TSTDSMTNSNNSSATSSTTPSPTQTSTITTTS), and 124–206 (NSNN…PQLS). Disordered regions lie at residues 57 to 234 (TTTT…KEDS) and 276 to 310 (SSNNTDSTNNDNSSILNDQQNQQQNQQQQNQQQQQ). Positions 289 to 317 (SILNDQQNQQQNQQQQNQQQQQEEINFIT) form a coiled coil. One can recognise an Alpha-type protein kinase domain in the interval 337–582 (EYSANDDEWT…ICLQFGLPPI (246 aa)). 7 WD repeats span residues 635–674 (GHDERVCSLLINQDKTKLYSASADGYVKIWNLTNNEDLSK), 683–720 (AHRRSIEKMLLNEKYLFTASSDGTIKIWSLPTTTTTTT), 741–780 (DHTAEVNDMCIDIENNFLVSCSFDKQIKIYDLSTFKCIKS), 783–820 (AHGKSIKSIYMSGKYLFSSSNDQSIKIWDLEMCMCVYG), 824–861 (AHDAPITSLRMFGNRLFSASKDGEIKDWNLSTFQPTTT), 864–902 (QHNMAITDILVTSNGYLFVSSDDSTIRIIDISNQNEPIK), and 909–941 (AHRSGVNSLATDGKRIFSGGCDNLIKVWNWKNK).

The protein belongs to the protein kinase superfamily. Alpha-type protein kinase family. ALPK subfamily.

The catalysed reaction is L-threonyl-[myosin heavy-chain] + ATP = O-phospho-L-threonyl-[myosin heavy-chain] + ADP + H(+). Phosphorylates threonine. Not critical for regulating the assembly and disassembly of myosin II filament. This chain is Myosin heavy chain kinase D (mhkD), found in Dictyostelium discoideum (Social amoeba).